We begin with the raw amino-acid sequence, 234 residues long: tRNA (guanine-N(1)-)-methyltransferase (234 aa).

S-adenosyl-L-methionine-binding positions include Gly110 and 134–139 (IGDYVL).

The protein belongs to the RNA methyltransferase TrmD family. As to quaternary structure, homodimer.

It localises to the cytoplasm. The enzyme catalyses guanosine(37) in tRNA + S-adenosyl-L-methionine = N(1)-methylguanosine(37) in tRNA + S-adenosyl-L-homocysteine + H(+). Functionally, specifically methylates guanosine-37 in various tRNAs. This chain is tRNA (guanine-N(1)-)-methyltransferase, found in Tropheryma whipplei (strain TW08/27) (Whipple's bacillus).